A 315-amino-acid chain; its full sequence is Cysteine synthase (315 aa).

Hydrogen sulfide contacts are provided by asparagine 8 and arginine 35. Lysine 42 is subject to N6-(pyridoxal phosphate)lysine. Residues asparagine 72 and 177–181 contribute to the pyridoxal 5'-phosphate site; that span reads GTGGT. Leucine 269 contributes to the hydrogen sulfide binding site. Serine 273 is a binding site for pyridoxal 5'-phosphate.

The protein belongs to the cysteine synthase/cystathionine beta-synthase family. Homodimer. Pyridoxal 5'-phosphate serves as cofactor.

It catalyses the reaction O-acetyl-L-serine + hydrogen sulfide = L-cysteine + acetate. Its pathway is amino-acid biosynthesis; L-cysteine biosynthesis; L-cysteine from L-serine: step 2/2. The sequence is that of Cysteine synthase (cysK) from Buchnera aphidicola subsp. Acyrthosiphon pisum (strain APS) (Acyrthosiphon pisum symbiotic bacterium).